We begin with the raw amino-acid sequence, 271 residues long: Ribosomal RNA small subunit methyltransferase A (271 aa).

Residues His18, Leu20, Gly45, Glu66, Asp91, and Asn113 each contribute to the S-adenosyl-L-methionine site.

Belongs to the class I-like SAM-binding methyltransferase superfamily. rRNA adenine N(6)-methyltransferase family. RsmA subfamily.

It is found in the cytoplasm. It catalyses the reaction adenosine(1518)/adenosine(1519) in 16S rRNA + 4 S-adenosyl-L-methionine = N(6)-dimethyladenosine(1518)/N(6)-dimethyladenosine(1519) in 16S rRNA + 4 S-adenosyl-L-homocysteine + 4 H(+). In terms of biological role, specifically dimethylates two adjacent adenosines (A1518 and A1519) in the loop of a conserved hairpin near the 3'-end of 16S rRNA in the 30S particle. May play a critical role in biogenesis of 30S subunits. The protein is Ribosomal RNA small subunit methyltransferase A of Baumannia cicadellinicola subsp. Homalodisca coagulata.